The sequence spans 383 residues: 1-deoxy-D-xylulose 5-phosphate reductoisomerase (383 aa).

Residues threonine 10, glycine 11, serine 12, isoleucine 13, glycine 36, arginine 37, asparagine 38, and asparagine 122 each coordinate NADPH. Lysine 123 is a binding site for 1-deoxy-D-xylulose 5-phosphate. Glutamate 124 contributes to the NADPH binding site. Aspartate 148 is a binding site for Mn(2+). Residues serine 149, glutamate 150, serine 174, and histidine 197 each contribute to the 1-deoxy-D-xylulose 5-phosphate site. Glutamate 150 is a Mn(2+) binding site. Glycine 203 contributes to the NADPH binding site. Residues serine 210, asparagine 215, lysine 216, and glutamate 219 each coordinate 1-deoxy-D-xylulose 5-phosphate. Glutamate 219 provides a ligand contact to Mn(2+).

It belongs to the DXR family. Requires Mg(2+) as cofactor. Mn(2+) is required as a cofactor.

It carries out the reaction 2-C-methyl-D-erythritol 4-phosphate + NADP(+) = 1-deoxy-D-xylulose 5-phosphate + NADPH + H(+). It participates in isoprenoid biosynthesis; isopentenyl diphosphate biosynthesis via DXP pathway; isopentenyl diphosphate from 1-deoxy-D-xylulose 5-phosphate: step 1/6. In terms of biological role, catalyzes the NADPH-dependent rearrangement and reduction of 1-deoxy-D-xylulose-5-phosphate (DXP) to 2-C-methyl-D-erythritol 4-phosphate (MEP). The chain is 1-deoxy-D-xylulose 5-phosphate reductoisomerase from Bacillus subtilis (strain 168).